A 405-amino-acid chain; its full sequence is ATP phosphoribosyltransferase regulatory subunit (405 aa).

The protein belongs to the class-II aminoacyl-tRNA synthetase family. HisZ subfamily. As to quaternary structure, heteromultimer composed of HisG and HisZ subunits.

Its subcellular location is the cytoplasm. Its pathway is amino-acid biosynthesis; L-histidine biosynthesis; L-histidine from 5-phospho-alpha-D-ribose 1-diphosphate: step 1/9. Required for the first step of histidine biosynthesis. May allow the feedback regulation of ATP phosphoribosyltransferase activity by histidine. The protein is ATP phosphoribosyltransferase regulatory subunit of Oceanobacillus iheyensis (strain DSM 14371 / CIP 107618 / JCM 11309 / KCTC 3954 / HTE831).